The sequence spans 82 residues: Putative antitoxin RelB1 (82 aa).

Functionally, antitoxin component of a type II toxin-antitoxin (TA) system. Its cognate toxin is RelE1 (Potential). The sequence is that of Putative antitoxin RelB1 (relB1) from Methanocaldococcus jannaschii (strain ATCC 43067 / DSM 2661 / JAL-1 / JCM 10045 / NBRC 100440) (Methanococcus jannaschii).